Here is a 143-residue protein sequence, read N- to C-terminus: UPF0201 protein Pcal_0593 (143 aa).

Belongs to the UPF0201 family.

The sequence is that of UPF0201 protein Pcal_0593 from Pyrobaculum calidifontis (strain DSM 21063 / JCM 11548 / VA1).